The chain runs to 776 residues: Venom dipeptidyl peptidase 4 (776 aa).

An N-terminal signal peptide occupies residues 1-19 (MVPLRSFVLLNGLFFVLLA). Asn44, Asn66, and Asn329 each carry an N-linked (GlcNAc...) asparagine glycan. 2 cysteine pairs are disulfide-bonded: Cys449/Cys452 and Cys462/Cys480. 2 N-linked (GlcNAc...) asparagine glycosylation sites follow: Asn504 and Asn577. Ser638 functions as the Charge relay system in the catalytic mechanism. Cysteines 658 and 769 form a disulfide. Asn693 carries N-linked (GlcNAc...) asparagine glycosylation. Active-site charge relay system residues include Asp717 and His749.

The protein belongs to the peptidase S9B family. DPPIV subfamily. Expressed by the venom gland.

The protein localises to the secreted. The catalysed reaction is Release of an N-terminal dipeptide, Xaa-Yaa-|-Zaa-, from a polypeptide, preferentially when Yaa is Pro, provided Zaa is neither Pro nor hydroxyproline.. Functionally, venom dipeptidyl-peptidase which removes N-terminal dipeptides sequentially from polypeptides having unsubstituted N-termini provided that the penultimate residue is proline. May process venom proteins into their active forms and/or modulate the chemotactic activity of immune cells after the insect sting. The chain is Venom dipeptidyl peptidase 4 from Vespa velutina (Asian yellow-legged hornet).